The following is a 331-amino-acid chain: Putative serine/threonine-protein kinase ZK507.1 (331 aa).

Residues 1–270 (MKVNEEGFAI…CKLTLKEPLV (270 aa)) form the Protein kinase domain. Aspartate 116 (proton acceptor) is an active-site residue. The segment covering 302–314 (SDRNEENSLDRSK) has biased composition (basic and acidic residues). The interval 302–331 (SDRNEENSLDRSKTGTLSFNNSKNKKPSRY) is disordered.

The protein belongs to the protein kinase superfamily. Ser/Thr protein kinase family.

The catalysed reaction is L-seryl-[protein] + ATP = O-phospho-L-seryl-[protein] + ADP + H(+). It carries out the reaction L-threonyl-[protein] + ATP = O-phospho-L-threonyl-[protein] + ADP + H(+). In Caenorhabditis elegans, this protein is Putative serine/threonine-protein kinase ZK507.1.